Reading from the N-terminus, the 243-residue chain is ATP synthase subunit a, chloroplastic (243 aa).

The next 5 membrane-spanning stretches (helical) occupy residues 32 to 52 (GQVL…SFVG), 96 to 116 (TVFL…WALI), 129 to 149 (DINT…YAGI), 195 to 215 (LVVG…IMLL), and 216 to 236 (GCFT…AYIG).

Belongs to the ATPase A chain family. In terms of assembly, F-type ATPases have 2 components, CF(1) - the catalytic core - and CF(0) - the membrane proton channel. CF(1) has five subunits: alpha(3), beta(3), gamma(1), delta(1), epsilon(1). CF(0) has four main subunits: a, b, b' and c.

It is found in the plastid. The protein localises to the chloroplast thylakoid membrane. Functionally, key component of the proton channel; it plays a direct role in the translocation of protons across the membrane. This Tetradesmus obliquus (Green alga) protein is ATP synthase subunit a, chloroplastic.